Here is a 2605-residue protein sequence, read N- to C-terminus: Protein ABERRANT POLLEN TRANSMISSION 1 (2605 aa).

The first 43 residues, 1 to 43, serve as a signal peptide directing secretion; sequence MMLGLVQLLVGFVVAWEAVELVLRHGLLLSVFKLAILAALAAA. A disordered region spans residues 137 to 158; sequence STNKKKPAPRKPISTTTAKAKG. N-linked (GlcNAc...) asparagine glycans are attached at residues Asn-232, Asn-320, Asn-348, Asn-516, Asn-587, Asn-628, Asn-696, Asn-779, Asn-1171, Asn-1318, and Asn-1459. The tract at residues 305–326 is disordered; sequence SASTVAEQKDEPSVDNKSAARS. Positions 311–326 are enriched in basic and acidic residues; it reads EQKDEPSVDNKSAARS. Residues 1761 to 1818 form a disordered region; that stretch reads MSKDGALSSVSSTSQPSEPQQIKSSESPPSNGSGKPDLTSSSENALKRSNNSDSEEEG. Residues 1768 to 1781 are compositionally biased toward low complexity; the sequence is SSVSSTSQPSEPQQ. Positions 1782–1812 are enriched in polar residues; that stretch reads IKSSESPPSNGSGKPDLTSSSENALKRSNNS. 5 N-linked (GlcNAc...) asparagine glycosylation sites follow: Asn-1791, Asn-1810, Asn-2003, Asn-2280, and Asn-2291. 2 disordered regions span residues 2269-2312 and 2332-2361; these read VSTT…SSFD and EGQT…REDK. The segment covering 2281-2300 has biased composition (polar residues); it reads TSVAETNSPNNQSSKETTFA. Basic and acidic residues-rich tracts occupy residues 2303–2312 and 2343–2361; these read PELRRTSSFD and DAAK…REDK. Residues Asn-2468 and Asn-2564 are each glycosylated (N-linked (GlcNAc...) asparagine). A disordered region spans residues 2574–2605; it reads TELEVAELPPRAPGYNTDSSSDSSSAETSPKD.

Belongs to the SABRE family. Mature pollen-specific.

Its subcellular location is the secreted. The protein resides in the golgi apparatus. Its function is as follows. May be involved in membrane trafficking. Required for tip growth in pollen tubes and root hairs. This Zea mays (Maize) protein is Protein ABERRANT POLLEN TRANSMISSION 1.